The following is a 931-amino-acid chain: Up-regulator of cell proliferation (931 aa).

Ser-3 bears the Phosphoserine mark. A VLIG-type G domain is found at 689 to 929 (RSRLVVLSTV…NIQQLIELVR (241 aa)).

The protein belongs to the TRAFAC class dynamin-like GTPase superfamily. Very large inducible GTPase (VLIG) family. As to expression, strongly expressed in hepatitis B virus-infected liver and in HCC cells. Also highly expressed in well-differentiated gastric cancer tissues and various gastric cancer cell lines.

The protein localises to the cytoplasm. Its subcellular location is the nucleus. In terms of biological role, may be involved in cell cycle progression through the regulation of cyclin D1 expression. May participate in the development of hepatocellular carcinoma (HCC) by promoting hepatocellular growth and survival. May play an important role in development of gastric cancer. This is Up-regulator of cell proliferation (URGCP) from Homo sapiens (Human).